The following is a 361-amino-acid chain: MKKLLLIFLFSLVILQTACGFDYDDKEIESEEGLSTLYDRWRSHHSVPRSLNEREKRFNVFRHNVMHVHNTNKKNRSYKLKLNKFADLTINEFKNAYTGSNIKHHRMLQGPKRGSKQFMYDHENLSKLPSSVDWRKKGAVTEIKNQGKCGSCWAFSTVAAVEGINKIKTNKLVSLSEQELVDCDTKQNEGCNGGLMEIAFEFIKKNGGITTEDSYPYEGIDGKCDASKDNGVLVTIDGHEDVPENDENALLKAVANQPVSVAIDAGSSDFQFYSEGVFTGSCGTELNHGVAAVGYGSERGKKYWIVRNSWGAEWGEGGYIKIEREIDEPEGRCGIAMEASYPIKLSSSNPTPKDGDVKDEL.

The signal sequence occupies residues methionine 1–glycine 20. The propeptide at phenylalanine 21 to lysine 127 is activation peptide. Asparagine 75 and asparagine 124 each carry an N-linked (GlcNAc...) asparagine glycan. 3 cysteine pairs are disulfide-bonded: cysteine 149-cysteine 191, cysteine 183-cysteine 224, and cysteine 282-cysteine 333. Residue cysteine 152 is part of the active site. Residues histidine 288 and asparagine 308 contribute to the active site. The Prevents secretion from ER motif lies at lysine 358–leucine 361.

It belongs to the peptidase C1 family. In terms of tissue distribution, expressed in roots, stems, rosette and cauline leaves, flowers, buds and green siliques. Found in the tip of young primary leaves, in very young root tips and at later stages in all tissues of lateral root, including the vascular bundle. Not expressed in lateral root primordia, while directly emerging through the epidermis.

The protein resides in the endoplasmic reticulum. Involved in the final stage of developmental programmed cell death and in intercalation of new cells. Cleaves extensins, thus probably supporting the final cell collapse. The sequence is that of KDEL-tailed cysteine endopeptidase CEP2 from Arabidopsis thaliana (Mouse-ear cress).